The following is a 454-amino-acid chain: Cytochrome b-c1 complex subunit 2, mitochondrial (454 aa).

Residues 1 to 35 (MISRSALSRGSQLALRRPAAAKTAQRGFAAAAASP) constitute a mitochondrion transit peptide.

It belongs to the peptidase M16 family. UQCRC2/QCR2 subfamily. In terms of assembly, component of the ubiquinol-cytochrome c oxidoreductase (cytochrome b-c1 complex, complex III, CIII), a multisubunit enzyme composed of 10 subunits. The complex is composed of 3 respiratory subunits cytochrome b (cob), cytochrome c1 (cyt-1) and Rieske protein (fes-1), 2 core protein subunits pep and ucr-1, and 5 low-molecular weight protein subunits qcr6, qcr7, qcr8, qcr9 and probably NCU16844/qcr10. The complex exists as an obligatory dimer and forms supercomplexes (SCs) in the inner mitochondrial membrane with NADH-ubiquinone oxidoreductase (complex I, CI) and cytochrome c oxidase (complex IV, CIV), resulting in different assemblies (supercomplexes SCI(1)III(2), SCIII(2)IV(1) and SCIII(2)IV(2) as well as higher order I(x)III(y)IV(z) megacomplexes).

Its subcellular location is the mitochondrion inner membrane. Component of the ubiquinol-cytochrome c oxidoreductase, a multisubunit transmembrane complex that is part of the mitochondrial electron transport chain which drives oxidative phosphorylation. The respiratory chain contains 3 multisubunit complexes succinate dehydrogenase (complex II, CII), ubiquinol-cytochrome c oxidoreductase (cytochrome b-c1 complex, complex III, CIII) and cytochrome c oxidase (complex IV, CIV), that cooperate to transfer electrons derived from NADH and succinate to molecular oxygen, creating an electrochemical gradient over the inner membrane that drives transmembrane transport and the ATP synthase. The cytochrome b-c1 complex catalyzes electron transfer from ubiquinol to cytochrome c, linking this redox reaction to translocation of protons across the mitochondrial inner membrane, with protons being carried across the membrane as hydrogens on the quinol. In the process called Q cycle, 2 protons are consumed from the matrix, 4 protons are released into the intermembrane space and 2 electrons are passed to cytochrome c. The sequence is that of Cytochrome b-c1 complex subunit 2, mitochondrial (ucr-1) from Neurospora crassa (strain ATCC 24698 / 74-OR23-1A / CBS 708.71 / DSM 1257 / FGSC 987).